The following is a 310-amino-acid chain: Ribosomal RNA small subunit methyltransferase H (310 aa).

Residues 33–35 (AGH), Asp-53, Phe-79, Asp-100, and Gln-107 each bind S-adenosyl-L-methionine.

The protein belongs to the methyltransferase superfamily. RsmH family.

The protein localises to the cytoplasm. The catalysed reaction is cytidine(1402) in 16S rRNA + S-adenosyl-L-methionine = N(4)-methylcytidine(1402) in 16S rRNA + S-adenosyl-L-homocysteine + H(+). Functionally, specifically methylates the N4 position of cytidine in position 1402 (C1402) of 16S rRNA. The chain is Ribosomal RNA small subunit methyltransferase H from Desulfitobacterium hafniense (strain DSM 10664 / DCB-2).